A 391-amino-acid chain; its full sequence is 3-ketoacyl-CoA thiolase (391 aa).

Residue Cys95 is the Acyl-thioester intermediate of the active site. Active-site proton acceptor residues include His347 and Cys377.

The protein belongs to the thiolase-like superfamily. Thiolase family. In terms of assembly, heterotetramer of two alpha chains (FadB) and two beta chains (FadA).

Its subcellular location is the cytoplasm. The enzyme catalyses an acyl-CoA + acetyl-CoA = a 3-oxoacyl-CoA + CoA. It functions in the pathway lipid metabolism; fatty acid beta-oxidation. Its function is as follows. Catalyzes the final step of fatty acid oxidation in which acetyl-CoA is released and the CoA ester of a fatty acid two carbons shorter is formed. The chain is 3-ketoacyl-CoA thiolase from Pseudomonas putida (strain ATCC 47054 / DSM 6125 / CFBP 8728 / NCIMB 11950 / KT2440).